The chain runs to 436 residues: 5-hydroxytryptamine receptor 6 (436 aa).

At 1 to 27 the chain is on the extracellular side; sequence MVPEPGPVNSSTPAWGPGPPPAPGGSG. The N-linked (GlcNAc...) asparagine glycan is linked to Asn9. Residues 28–52 traverse the membrane as a helical segment; sequence WVAAALCVVIVLTAAANSLLIVLIC. At 53-62 the chain is on the cytoplasmic side; the sequence is TQPALRNTSN. The chain crosses the membrane as a helical span at residues 63–88; the sequence is FFLVSLFTSDLMVGLVVMPPAMLNAL. At 89 to 96 the chain is on the extracellular side; that stretch reads YGRWVLAR. Residues 97–122 traverse the membrane as a helical segment; it reads GLCLLWTAFDVMCCSASILNLCLISL. A disulfide bridge links Cys99 with Cys180. Residue Asp106 participates in serotonin binding. The Cytoplasmic portion of the chain corresponds to 123-142; that stretch reads DRYLLILSPLRYKLRMTAPR. The chain crosses the membrane as a helical span at residues 143-167; sequence ALALILGAWSLAALASFLPLLLGWH. The Extracellular portion of the chain corresponds to 168–185; the sequence is ELGKARTPAPGQCRLLAS. The chain crosses the membrane as a helical span at residues 186–209; that stretch reads LPFVLVASGVTFFLPSGAICFTYC. Residues 210–266 are Cytoplasmic-facing; that stretch reads RILLAARKQAVQVASLTTGTAGQALETLQVPRTPRPGMESADSRRLATKHSRKALKA. Residues 267–293 traverse the membrane as a helical segment; that stretch reads SLTLGILLGMFFVTWLPFFVANIAQAV. Asn288 contacts serotonin. Over 294 to 299 the chain is Extracellular; it reads CDCISP. A helical membrane pass occupies residues 300–323; that stretch reads GLFDVLTWLGYCNSTMNPIIYPLF. The Cytoplasmic segment spans residues 324–436; the sequence is MRDFKRALGR…RYGRIHSVPP (113 aa).

It belongs to the G-protein coupled receptor 1 family. As to quaternary structure, interacts with MTOR, RPTOR and NF1. Interacts with CDK5. As to expression, localized exclusively in the central nervous system, predominantly in the corpus striatum but also in various limbic and cortical regions.

Its subcellular location is the cell membrane. Functionally, G-protein coupled receptor for 5-hydroxytryptamine (serotonin), a biogenic hormone that functions as a neurotransmitter, a hormone and a mitogen. Also has a high affinity for tricyclic psychotropic drugs. Ligand binding causes a conformation change that triggers signaling via guanine nucleotide-binding proteins (G proteins) and modulates the activity of downstream effectors. HTR6 is coupled to G(s) G alpha proteins and mediates activation of adenylate cyclase activity. Controls pyramidal neurons migration during corticogenesis, through the regulation of CDK5 activity. Is an activator of mTOR signaling. The polypeptide is 5-hydroxytryptamine receptor 6 (Htr6) (Rattus norvegicus (Rat)).